Consider the following 68-residue polypeptide: Beta-defensin 1 (68 aa).

The first 21 residues, Met1–Gly21, serve as a signal peptide directing secretion. The propeptide occupies Asp22–Ser32. 3 disulfides stabilise this stretch: Cys37/Cys66, Cys44/Cys59, and Cys49/Cys67.

The protein belongs to the beta-defensin family. In terms of assembly, monomer. Homodimer.

It localises to the secreted. Its subcellular location is the membrane. In terms of biological role, has bactericidal activity. May act as a ligand for C-C chemokine receptor CCR6. Positively regulates the sperm motility and bactericidal activity in a CCR6-dependent manner. Binds to CCR6 and triggers Ca2+ mobilization in the sperm which is important for its motility. In Hylobates moloch (Silvery gibbon), this protein is Beta-defensin 1 (DEFB1).